Reading from the N-terminus, the 485-residue chain is Ribulose bisphosphate carboxylase large chain (485 aa).

Substrate-binding residues include asparagine 124 and threonine 174. Residue lysine 176 is the Proton acceptor of the active site. Lysine 178 serves as a coordination point for substrate. Residues lysine 202, aspartate 204, and glutamate 205 each coordinate Mg(2+). At lysine 202 the chain carries N6-carboxylysine. Catalysis depends on histidine 294, which acts as the Proton acceptor. 3 residues coordinate substrate: arginine 295, histidine 327, and serine 379.

Belongs to the RuBisCO large chain family. Type I subfamily. In terms of assembly, heterohexadecamer of 8 large chains and 8 small chains. Mg(2+) is required as a cofactor.

The enzyme catalyses 2 (2R)-3-phosphoglycerate + 2 H(+) = D-ribulose 1,5-bisphosphate + CO2 + H2O. It catalyses the reaction D-ribulose 1,5-bisphosphate + O2 = 2-phosphoglycolate + (2R)-3-phosphoglycerate + 2 H(+). Functionally, ruBisCO catalyzes two reactions: the carboxylation of D-ribulose 1,5-bisphosphate, the primary event in carbon dioxide fixation, as well as the oxidative fragmentation of the pentose substrate. Both reactions occur simultaneously and in competition at the same active site. The polypeptide is Ribulose bisphosphate carboxylase large chain (Rhodopseudomonas palustris (strain TIE-1)).